A 790-amino-acid chain; its full sequence is Protein SEY1 (790 aa).

Over 1–692 (MELSEGELSH…KRSIVQHITQ (692 aa)) the chain is Cytoplasmic. The region spanning 55–284 (GNNYHIISVF…VNNELFKPEY (230 aa)) is the GB1/RHD3-type G domain. Residue 65 to 72 (GSQSTGKS) participates in GTP binding. The chain crosses the membrane as a helical span at residues 693–713 (IPYYIYLIILVLGWNEFMAII). The Lumenal segment spans residues 714 to 716 (RNP). Residues 717 to 737 (LFFSLSIVLGATVYVLYYLNL) form a helical membrane-spanning segment. At 738–790 (LKPAMLVAQRTMDEVIIMAKTKLREVLIDDHEVTGRQLNKIAGGKENIELDDM) the chain is on the cytoplasmic side.

The protein belongs to the TRAFAC class dynamin-like GTPase superfamily. GB1/RHD3 GTPase family. RHD3 subfamily.

The protein resides in the endoplasmic reticulum membrane. Cooperates with the reticulon proteins and tubule-shaping DP1 family proteins to generate and maintain the structure of the tubular endoplasmic reticulum network. Has GTPase activity, which is required for its function in ER organization. This chain is Protein SEY1, found in Candida dubliniensis (strain CD36 / ATCC MYA-646 / CBS 7987 / NCPF 3949 / NRRL Y-17841) (Yeast).